A 1036-amino-acid chain; its full sequence is ADAMTS-like protein 4 (1036 aa).

The signal sequence occupies residues 1 to 24; sequence MESWLGRLWLCMMLLLPLPQPCQD. Residues 47-91 enclose the TSP type-1 1 domain; it reads GPWGRWASCSQPCGVGVQRRSRTCELHPALPLPPRPPRHPEAHRP. Disordered regions lie at residues 73–149 and 163–308; these read HPAL…IKPG and HRSR…WLPL. A compositionally biased stretch (basic residues) spans 163–173; sequence HRSRRHPHRPG. Over residues 215 to 253 the composition is skewed to polar residues; it reads TPRSGTAQTEVLPRTSSAPSYTGTPAPTSSFGDSRSFQG. Residues Asn-454 and Asn-737 are each glycosylated (N-linked (GlcNAc...) asparagine). TSP type-1 domains lie at 687–748, 750–804, 805–871, 872–931, and 932–988; these read CPPY…HLCG, WEIS…DMGP, CTTA…GPCE, RTWR…QGQA, and CEDK…QPCN. In terms of domain architecture, PLAC spans 991–1028; sequence PDDQCKDSSPHCPLVVQARLCVYPYYTTTCCRSCAHVL.

In terms of assembly, interacts with CTSB. Interacts with FBN1. Post-translationally, glycosylated. Can be O-fucosylated by POFUT2 on a serine or a threonine residue found within the consensus sequence C1-X(2)-(S/T)-C2-G of the TSP type-1 repeat domains where C1 and C2 are the first and second cysteine residue of the repeat, respectively. Fucosylated repeats can then be further glycosylated by the addition of a beta-1,3-glucose residue by the glucosyltransferase, B3GALTL. Fucosylation mediates the efficient secretion of ADAMTS family members. Can also be C-glycosylated with one or two mannose molecules on tryptophan residues within the consensus sequence W-X-X-W of the TPRs, and N-glycosylated. These other glycosylations can also facilitate secretion. In terms of tissue distribution, widely expressed in a range of tissues. Especially prevalent in brain, spinal cord, muscle, lung and heart.

It is found in the secreted. It localises to the extracellular space. The protein resides in the extracellular matrix. Its function is as follows. Positive regulation of apoptosis. May facilitate FBN1 microfibril biogenesis. The polypeptide is ADAMTS-like protein 4 (Mus musculus (Mouse)).